The chain runs to 185 residues: Ribosome-recycling factor (185 aa).

Belongs to the RRF family.

The protein localises to the cytoplasm. Functionally, responsible for the release of ribosomes from messenger RNA at the termination of protein biosynthesis. May increase the efficiency of translation by recycling ribosomes from one round of translation to another. The chain is Ribosome-recycling factor from Nitrosospira multiformis (strain ATCC 25196 / NCIMB 11849 / C 71).